Here is an 883-residue protein sequence, read N- to C-terminus: Pre-mRNA-splicing factor syf1 homolog (883 aa).

12 HAT repeats span residues 13–45, 46–78, 88–120, 122–156, 158–190, 268–303, 368–406, 463–495, 531–565, 570–604, 642–676, and 678–712; these read INFEVEDVPYEEEILRNAYSVKHWLRYIDHKAK, APNNGVNMVYERALKELPGSYKIWHNYLRTRRK, PMYEEVNSAFERALVFMHKMPRIWMDYGAFMTS, CKITRTRHVFDRALRALPITQHGRIWPLYLQFVRR, EMPETALRVYRRYLKLFPEDTEEYVDYLQEADR, GLFDRARDIYEEAIQTVTTVRDFTQVFDEYAQFEEL, DKPAEIISTYTEAVQTVQPKQAVGKLHTLWVEFAKFYEA, KRKIAYYDDTETVQARLHRSLKVWSMYADLEES, NYFEEAYRAYEKGISLFKWPNVYDIWNSYLTKFLE, TKLERARDLFEQCLDQCPPEHAKYFYLLYAKLEEE, YGLPRTREIYEKAIESLPEQNMRHMCVKFAELETK, and GEVDRARAIYAHCSQVCDPRITADFWQTWKEFEVR. Disordered stretches follow at residues 794 to 851 and 864 to 883; these read RGET…DEEG and IPAKVFGSLKPSNQGDSDGE. Residues 812-834 are compositionally biased toward acidic residues; that stretch reads DEIDIGDSDEDDEEEDDDEENEM. Polar residues-rich tracts occupy residues 835-844 and 873-883; these read TNENQASAAV and KPSNQGDSDGE.

The protein belongs to the crooked-neck family. In terms of assembly, component of the NTC(Nineteen)/Prp19 complex composed of at least fand, Prp19,CG9667/ISY1 and Cdc5/CDC5L. Within the complex, interacts with Prp19 and ISY1/CG9667.

The protein localises to the nucleus. In terms of biological role, subunit of the NTC(Nineteen)/Prp19 complex, which is part of the spliceosome. The complex participates in spliceosome assembly, its remodeling and is required for efficient spliceosome activation. Essential for efficient pre-mRNA splicing. In embryos, efficient pre-mRNA splicing of zygotic transcripts is essential during dynamic cellular processes that require rapid division and/or dramatic changes in gene expression such as blastoderm cellularization, tracheal branching morphogenesis, Malpighian morphogenesis and epidermal development. Part of its role in promoting embryo tracheal development is also due to specifically splicing bnl transcripts which results in the activation of the BNL-FGF pathway. This chain is Pre-mRNA-splicing factor syf1 homolog, found in Drosophila melanogaster (Fruit fly).